We begin with the raw amino-acid sequence, 106 residues long: Urease subunit beta (106 aa).

This sequence belongs to the urease beta subunit family. Heterotrimer of UreA (gamma), UreB (beta) and UreC (alpha) subunits. Three heterotrimers associate to form the active enzyme. The apoenzyme interacts with an accessory complex composed of UreD, UreF and UreG, which is required for the assembly of the nickel containing metallocenter of UreC. The UreE protein may also play a direct role as a metallochaperone in nickel transfer to the urease apoprotein.

It localises to the cytoplasm. The catalysed reaction is urea + 2 H2O + H(+) = hydrogencarbonate + 2 NH4(+). It participates in nitrogen metabolism; urea degradation; CO(2) and NH(3) from urea (urease route): step 1/1. Its activity is regulated as follows. The apoenzyme can be activated in vitro in the presence of nickel ions and carbon dioxide, which promotes carboxylation of 'Lys-217' of the UreC (alpha) subunit. The polypeptide is Urease subunit beta (Klebsiella aerogenes (Enterobacter aerogenes)).